Reading from the N-terminus, the 199-residue chain is dITP/XTP pyrophosphatase (199 aa).

Position 7 to 12 (7 to 12 (SANKGK)) interacts with substrate. Mg(2+) is bound by residues D38 and D73. D73 (proton acceptor) is an active-site residue. Residues S74, 155 to 158 (FGYD), K178, and 183 to 184 (HR) each bind substrate.

It belongs to the HAM1 NTPase family. In terms of assembly, homodimer. Mg(2+) is required as a cofactor.

It carries out the reaction XTP + H2O = XMP + diphosphate + H(+). The enzyme catalyses dITP + H2O = dIMP + diphosphate + H(+). The catalysed reaction is ITP + H2O = IMP + diphosphate + H(+). In terms of biological role, pyrophosphatase that catalyzes the hydrolysis of nucleoside triphosphates to their monophosphate derivatives, with a high preference for the non-canonical purine nucleotides XTP (xanthosine triphosphate), dITP (deoxyinosine triphosphate) and ITP. Seems to function as a house-cleaning enzyme that removes non-canonical purine nucleotides from the nucleotide pool, thus preventing their incorporation into DNA/RNA and avoiding chromosomal lesions. The protein is dITP/XTP pyrophosphatase of Aliarcobacter butzleri (strain RM4018) (Arcobacter butzleri).